Reading from the N-terminus, the 450-residue chain is tRNA modification GTPase MnmE (450 aa).

(6S)-5-formyl-5,6,7,8-tetrahydrofolate is bound by residues Arg-23, Glu-81, and Lys-120. The TrmE-type G domain maps to 216-373 (GIHLVLAGKP…LLKKIATLAG (158 aa)). GTP contacts are provided by residues 226–231 (NAGKSS), 245–251 (TPQAGTT), 270–273 (DTAG), and 337–340 (NKAD). Mg(2+) contacts are provided by Ser-230 and Thr-251. Lys-450 contacts (6S)-5-formyl-5,6,7,8-tetrahydrofolate.

It belongs to the TRAFAC class TrmE-Era-EngA-EngB-Septin-like GTPase superfamily. TrmE GTPase family. As to quaternary structure, homodimer. Heterotetramer of two MnmE and two MnmG subunits. K(+) is required as a cofactor.

Its subcellular location is the cytoplasm. Functionally, exhibits a very high intrinsic GTPase hydrolysis rate. Involved in the addition of a carboxymethylaminomethyl (cmnm) group at the wobble position (U34) of certain tRNAs, forming tRNA-cmnm(5)s(2)U34. In Dichelobacter nodosus (strain VCS1703A), this protein is tRNA modification GTPase MnmE.